The sequence spans 425 residues: Serine--tRNA ligase (425 aa).

230–232 (TAE) contacts L-serine. 261-263 (RSE) contacts ATP. Residue Glu-284 coordinates L-serine. 348-351 (EISS) contacts ATP. L-serine is bound at residue Ser-384.

This sequence belongs to the class-II aminoacyl-tRNA synthetase family. Type-1 seryl-tRNA synthetase subfamily. Homodimer. The tRNA molecule binds across the dimer.

It is found in the cytoplasm. The catalysed reaction is tRNA(Ser) + L-serine + ATP = L-seryl-tRNA(Ser) + AMP + diphosphate + H(+). It catalyses the reaction tRNA(Sec) + L-serine + ATP = L-seryl-tRNA(Sec) + AMP + diphosphate + H(+). It functions in the pathway aminoacyl-tRNA biosynthesis; selenocysteinyl-tRNA(Sec) biosynthesis; L-seryl-tRNA(Sec) from L-serine and tRNA(Sec): step 1/1. Functionally, catalyzes the attachment of serine to tRNA(Ser). Is also able to aminoacylate tRNA(Sec) with serine, to form the misacylated tRNA L-seryl-tRNA(Sec), which will be further converted into selenocysteinyl-tRNA(Sec). The chain is Serine--tRNA ligase from Streptococcus pyogenes serotype M3 (strain SSI-1).